Here is a 423-residue protein sequence, read N- to C-terminus: Serine--tRNA ligase (423 aa).

230–232 (TSE) is an L-serine binding site. 261–263 (RSE) is a binding site for ATP. E284 lines the L-serine pocket. ATP is bound at residue 348–351 (EISS). S384 serves as a coordination point for L-serine.

The protein belongs to the class-II aminoacyl-tRNA synthetase family. Type-1 seryl-tRNA synthetase subfamily. In terms of assembly, homodimer. The tRNA molecule binds across the dimer.

Its subcellular location is the cytoplasm. It carries out the reaction tRNA(Ser) + L-serine + ATP = L-seryl-tRNA(Ser) + AMP + diphosphate + H(+). The catalysed reaction is tRNA(Sec) + L-serine + ATP = L-seryl-tRNA(Sec) + AMP + diphosphate + H(+). The protein operates within aminoacyl-tRNA biosynthesis; selenocysteinyl-tRNA(Sec) biosynthesis; L-seryl-tRNA(Sec) from L-serine and tRNA(Sec): step 1/1. In terms of biological role, catalyzes the attachment of serine to tRNA(Ser). Is also able to aminoacylate tRNA(Sec) with serine, to form the misacylated tRNA L-seryl-tRNA(Sec), which will be further converted into selenocysteinyl-tRNA(Sec). The sequence is that of Serine--tRNA ligase from Macrococcus caseolyticus (strain JCSC5402) (Macrococcoides caseolyticum).